A 528-amino-acid chain; its full sequence is Tyrosine--tRNA ligase, cytoplasmic (528 aa).

Tyr-39 lines the L-tyrosine pocket. The 'HIGH' region motif lies at 44–52 (TTGKPHVAY). L-tyrosine is bound by residues Tyr-166, Gln-170, Asp-173, and Gln-188. A 'KMSKS' region motif is present at residues 222–226 (KMSSS). The short motif at 242–247 (KKKLKK) is the Nuclear localization signal element. Positions 332–362 (EMKKLSNDAYPDASKQKSVPKGSTKNSGTEE) are disordered. A tRNA-binding domain is found at 364-468 (DPSLLDLRVG…SGSAPGERIY (105 aa)).

It belongs to the class-I aminoacyl-tRNA synthetase family. In terms of assembly, homodimer.

It is found in the cytoplasm. The protein resides in the nucleus. The catalysed reaction is tRNA(Tyr) + L-tyrosine + ATP = L-tyrosyl-tRNA(Tyr) + AMP + diphosphate + H(+). Its function is as follows. Catalyzes the attachment of tyrosine to tRNA(Tyr) in a two-step reaction: tyrosine is first activated by ATP to form Tyr-AMP and then transferred to the acceptor end of tRNA(Tyr). This is Tyrosine--tRNA ligase, cytoplasmic (yars1) from Xenopus laevis (African clawed frog).